Reading from the N-terminus, the 101-residue chain is Small ribosomal subunit protein uS14 (101 aa).

The protein belongs to the universal ribosomal protein uS14 family. As to quaternary structure, part of the 30S ribosomal subunit. Contacts proteins S3 and S10.

In terms of biological role, binds 16S rRNA, required for the assembly of 30S particles and may also be responsible for determining the conformation of the 16S rRNA at the A site. The polypeptide is Small ribosomal subunit protein uS14 (Maricaulis maris (strain MCS10) (Caulobacter maris)).